A 71-amino-acid chain; its full sequence is Heat-stable enterotoxin II (71 aa).

The signal sequence occupies residues 1–23; sequence MKKNIAFLLASMFVFSIATNAYA. Disulfide bonds link Cys-33-Cys-71 and Cys-44-Cys-59.

It is found in the secreted. In terms of biological role, toxin which activates the particulate form of guanylate cyclase and increases cyclic GMP levels within the host intestinal epithelial cells. This Escherichia coli protein is Heat-stable enterotoxin II (stiI).